The sequence spans 136 residues: Protein BUNDLE SHEATH DEFECTIVE 2, chloroplastic (136 aa).

A chloroplast-targeting transit peptide spans 1–56 (MANSLCFFSSPPTFCFQSPSKNPKPSHFFSTNDNTSSLVQKRELLQTSRSQSFEVK). The CR-type zinc-finger motif lies at 62–133 (PQGTKPNSLV…AGFIGGFLST (72 aa)). Residues cysteine 72, cysteine 75, glutamate 78, cysteine 80, cysteine 83, cysteine 86, cysteine 107, cysteine 110, glutamate 115, cysteine 118, and cysteine 121 each contribute to the Zn(2+) site.

It belongs to the BSD2 chaperone family. As to quaternary structure, interacts with the RuBisCo large subunit (RbcL) assembled as an intermediate complex made of eight RbcL and eight BSD2 subunits.

It is found in the plastid. The protein resides in the chloroplast stroma. In terms of biological role, chloroplast chaperone required for RuBisCo biogenesis and translational regulation of the RuBisCo large subunit (RbcL). Stabilizes an end-state assembly intermediate of eight RbcL subunits until the small subunits (RBCSs) become available to produce a complete stable RuBisCo complex containing eight small and eight large subunits. This chain is Protein BUNDLE SHEATH DEFECTIVE 2, chloroplastic, found in Arabidopsis thaliana (Mouse-ear cress).